We begin with the raw amino-acid sequence, 118 residues long: Large ribosomal subunit protein bL20 (118 aa).

This sequence belongs to the bacterial ribosomal protein bL20 family.

In terms of biological role, binds directly to 23S ribosomal RNA and is necessary for the in vitro assembly process of the 50S ribosomal subunit. It is not involved in the protein synthesizing functions of that subunit. The chain is Large ribosomal subunit protein bL20 from Oceanobacillus iheyensis (strain DSM 14371 / CIP 107618 / JCM 11309 / KCTC 3954 / HTE831).